The following is a 188-amino-acid chain: MSRGGFGGLCLGLVVMRCQPLRRALCLLGDNMQFYKADEYQASCENLYRKYELEIAALLPDASIEHIGTSSIPNAVSKGDLDILVGVNGKELENAVKLLSTLGFNEKSDTLRTPELCMLENSSGEDVAFQVVANGSEFEFFVGFRDKLRKNPELVQRYNELKISCTGWSHEEYRRKKSAFIERVLGQA.

It belongs to the UPF0157 (GrpB) family.

In Vibrio cholerae serotype O1 (strain ATCC 39315 / El Tor Inaba N16961), this protein is UPF0157 protein VC_A0354.